Here is a 110-residue protein sequence, read N- to C-terminus: Host transcription reprogramming factor 2 (110 aa).

The first 18 residues, 1–18, serve as a signal peptide directing secretion; that stretch reads MHLKASSILALLVIGANA. The C2H2-type zinc finger occupies 68–96; it reads IMCGYCGKRFWNKPDLEKHIKLKPSKGGH. Residues 88-110 form a disordered region; that stretch reads KLKPSKGGHKGQPYKEHSWNRPT. Positions 100–110 are enriched in basic and acidic residues; sequence PYKEHSWNRPT.

It localises to the secreted. The protein localises to the host nucleus. In terms of biological role, secreted effector that translocates into the nuclei of host cells to reprogram the expression of immunity-associated genes by binding to effector binding elements (EBEs) in rice. Binds the 5'-CCACCTCC-3' EBE of promoters from targeted rice genes and probably recruits a yet to be determined host repressor. Causes ambivalent immunity with increased susceptibility to the hemibiotrophic pathogens Magnaporthe oryzae and Xanthomonas oryzae pv. oryzae, but enhances resistance to Cochliobolus miyabeanus, a necrotrophic pathogen. The protein is Host transcription reprogramming factor 2 of Pyricularia oryzae (strain 70-15 / ATCC MYA-4617 / FGSC 8958) (Rice blast fungus).